A 529-amino-acid polypeptide reads, in one-letter code: Amino acid transporter heavy chain SLC3A2 (529 aa).

Positions 1 to 20 (MSQDTEVDMKEVELNELEPE) are disordered. At 1–84 (MSQDTEVDMK…SPGWVRTRWA (84 aa)) the chain is on the cytoplasmic side. Serine 2 carries the post-translational modification Phosphoserine. Threonine 5 is subject to Phosphothreonine. Basic and acidic residues predominate over residues 7–20 (VDMKEVELNELEPE). A Glycyl lysine isopeptide (Lys-Gly) (interchain with G-Cter in ubiquitin) cross-link involves residue lysine 49. Serine 65 carries the phosphoserine modification. Lysine 66 is covalently cross-linked (Glycyl lysine isopeptide (Lys-Gly) (interchain with G-Cter in SUMO2)). The chain crosses the membrane as a helical; Signal-anchor for type II membrane protein span at residues 85–105 (LLLLFWLGWIGMLAGAVVIIV). At 106–529 (RAPRCRELPV…GLLLHFPYVA (424 aa)) the chain is on the extracellular side. N-linked (GlcNAc...) asparagine glycosylation occurs at asparagine 266. 2 positions are modified to phosphoserine: serine 307 and serine 309. Asparagine 325 and asparagine 405 each carry an N-linked (GlcNAc...) asparagine glycan. Position 426 is a phosphoserine (serine 426).

Belongs to the SLC3A transporter family. As to quaternary structure, disulfide-linked heterodimer with a non-glycosylated light chain (SLC7A5, SLC7A6, SLC7A7, SLC7A8, SLC7A10 or SLC7A11). Interacts with TLCD3A/CT120 and ICAM1. Constitutively and specifically associates with beta-1 integrins (alpha-2/beta-1, alpha-3/beta-1, alpha-5/beta-1 and alpha-6/beta-1), but minimally with alpha-4/beta-1. Interacts with LAPTM4B; recruits SLC3A2 and SLC7A5 to lysosomes to promote leucine uptake into these organelles and is required for mTORC1 activation. In terms of processing, phosphorylation on Ser-307 or Ser-309 and on Ser-426 by ecto-protein kinases favors heterotypic cell-cell interactions. Post-translationally, N-glycosylated; N-glycosylation is crucial for trafficking and stability of SLC3A2 to the plasma membrane.

The protein resides in the apical cell membrane. It localises to the cell membrane. The protein localises to the cell junction. It is found in the lysosome membrane. Its subcellular location is the melanosome. The protein resides in the basolateral cell membrane. In terms of biological role, acts as a chaperone that facilitates biogenesis and trafficking of functional transporters heterodimers to the plasma membrane. Forms heterodimer with SLC7 family transporters (SLC7A5, SLC7A6, SLC7A7, SLC7A8, SLC7A10 and SLC7A11), a group of amino-acid antiporters. Heterodimers function as amino acids exchangers, the specificity of the substrate depending on the SLC7A subunit. Heterodimers formed by SLC3A2/SLC7A6 or SLC3A2/SLC7A7 mediate the uptake of dibasic amino acids. Heterodimer SLC3A2/SLC7A11 functions as an antiporter by mediating the exchange of extracellular anionic L-cystine and intracellular L-glutamate across the cellular plasma membrane. SLC3A2/SLC7A10 translocates small neutral L- and D-amino acids across the plasma membrane. SLC3A2/SLC75 or SLC3A2/SLC7A8 translocates neutral amino acids with broad specificity, thyroid hormones and L-DOPA. SLC3A2 is essential for plasma membrane localization, stability, and the transport activity of SLC7A5 and SLC7A8. When associated with LAPTM4B, the heterodimer SLC7A5 is recruited to lysosomes to promote leucine uptake into these organelles, and thereby mediates mTORC1 activation. Modulates integrin-related signaling and is essential for integrin-dependent cell spreading, migration and tumor progression. This chain is Amino acid transporter heavy chain SLC3A2, found in Oryctolagus cuniculus (Rabbit).